We begin with the raw amino-acid sequence, 527 residues long: MKSYLILNTLLLSLLKINGFSKSSWFSSKTSLIFDRINKLNDPQSSNSIHSRKYQYFQLKKFPNSTNVRCNDGSIPGYYTRPSTTNCSKKWLIFLEGGWYCFNNNTCESRRRTHYDLFSSEFWSSERQLGGILSNNERINPNFHDYNSVYIPYCSSDLWSGKQLEKTNGLYFHGSRILDTVVDDLTQNQHFKKVHEVAFVGSSAGGIGVLLNIDRLKRRLKKKLKRKVFIHGIVDSAWFLDYPAYRQSNCTHIYECPPENALRNGMKLWNPRIPRRCKKFQGRGREWKCFMGPVIYRHLKNPTFIIQSLFDDAQLQMSKVPILEGGSNKKFSYIQQLGGFAAQTLRQAKGVFAHSCVDHEILTKSNWAYVSVNNQRLHETLNYWQAYLEGEKKKIKKKVQKNPKLIKTGKSPCKNLRKPKFSGNIDQSKYQLIDSCHISQITSYKIQLPHNRTLSRCANAIPLIPLCNPTCSPLSHPISGLSMSFIDLLELYNVRINLIAKSLGISMEQLRKMNTQQQISLLYCSSR.

The N-terminal stretch at 1–19 is a signal peptide; the sequence is MKSYLILNTLLLSLLKING. N-linked (GlcNAc...) asparagine glycans are attached at residues N64, N86, and N104. Residue S203 is the Charge relay system of the active site. Residue N249 is glycosylated (N-linked (GlcNAc...) asparagine). Residues D311 and H359 each act as charge relay system in the active site. N-linked (GlcNAc...) asparagine glycosylation is present at N451.

Belongs to the pectinacetylesterase family. Notum subfamily. Expressed in the anterior pole.

The protein resides in the secreted. The catalysed reaction is [Wnt protein]-O-(9Z)-hexadecenoyl-L-serine + H2O = [Wnt protein]-L-serine + (9Z)-hexadecenoate + H(+). Functionally, carboxylesterase that acts as a key negative regulator of the Wnt signaling pathway. Acts by specifically mediating depalmitoleoylation of WNT proteins. Serine palmitoleoylation of WNT proteins is required for efficient binding to frizzled receptors. Promotes head regeneration following amputation by inhibiting the Wnt signaling pathway. The chain is Palmitoleoyl-protein carboxylesterase NOTUM from Schmidtea mediterranea (Freshwater planarian flatworm).